The primary structure comprises 710 residues: MNLFTPRSEINPTTTQELLYAYTGPAPVAYGTRTRAVLENIIRPYQYFYKEPNVQRALDIKTGCKEPEDINVEGPSSGFHTASVLKLADNFFRKYRPAMEKLKYWILVKLPKLKYAELSKGRQTYSFIHKRNLPAPIALEETVEFLEQNLRRKIGPTLLSYCQAIADVMELDETTYEGARDPRPWDIQLEEIDSDEEDPLFRQVGREETYTIKFSREELWDQMRTLNTMCKHLERGRLNRRTIATPSMLIRGFVKIVEDAAKEILENVPTSGVPVGGEEKLAKLASKQTFHTAVTGELSGDQEKFNECLDPDAMRLMWTVFLRKLGCPDWIMELFNIPFMVFKSKLADMGEGLVYTKGKLTDRKPLGEMPSEFDDLVRNVVGNSISCRLGMFMGMYNLTSTLLALISIEREELTGSHVESSDDFIHFFNCKTHEEMFKQAETLRLTLKLVGINMSPSKCILISPAGIGEFNSKFHHRDFVGNVATELPALVPNGTNPMTDLAMGLNVIKHSVNTGQMNLCTGALAMRIFNHAYKYAYMALGVTRRTRFMEENAITPLLTNQGASPVHSFSTMHLDEVALRRHLGLLDEETLRRILNPNNPVTQKGDPSMFFRIENKMPQIMEDYSVPSCFKYTLSRNRTIQDKPHKALLNKEERYQRVTSIINKLFPEVLIQEASAPGTVRESLKRRLELVVERSDLDEERKKRILSRIF.

Residues 285–460 enclose the RdRp catalytic domain; that stretch reads ASKQTFHTAV…GINMSPSKCI (176 aa).

Belongs to the influenza viruses polymerase PB1 family. In terms of assembly, RNA polymerase is composed of three subunits: PA, PB1 and PB2.

The enzyme catalyses RNA(n) + a ribonucleoside 5'-triphosphate = RNA(n+1) + diphosphate. RNA-dependent RNA polymerase which is responsible for replication and transcription of virus RNA segments. The transcription of viral mRNAs occurs by a unique mechanism called cap-snatching. 5' methylated caps of cellular mRNAs are cleaved after 10-13 nucleotides by PA. In turn, these short capped RNAs are used as primers by PB1 for transcription of viral mRNAs. During virus replication, PB1 initiates RNA synthesis and copy vRNA into complementary RNA (cRNA) which in turn serves as a template for the production of more vRNAs. The polypeptide is RNA-directed RNA polymerase catalytic subunit (Amblyomma variegatum (Tropical bont tick)).